Reading from the N-terminus, the 156-residue chain is Small ribosomal subunit protein uS7 (156 aa).

Belongs to the universal ribosomal protein uS7 family. Part of the 30S ribosomal subunit. Contacts proteins S9 and S11.

In terms of biological role, one of the primary rRNA binding proteins, it binds directly to 16S rRNA where it nucleates assembly of the head domain of the 30S subunit. Is located at the subunit interface close to the decoding center, probably blocks exit of the E-site tRNA. The polypeptide is Small ribosomal subunit protein uS7 (Gloeothece citriformis (strain PCC 7424) (Cyanothece sp. (strain PCC 7424))).